The following is a 215-amino-acid chain: Nascent polypeptide-associated complex subunit alpha (215 aa).

The segment at 1 to 81 is disordered; it reads MPGEATETVP…SEKKARKAMS (81 aa). The span at 9–28 shows a compositional bias: polar residues; that stretch reads VPATEQELPQPQAETGSGTE. Over residues 29 to 42 the composition is skewed to acidic residues; the sequence is SDSDESVPELEEQD. Ser-43 carries the phosphoserine; by ILK1 modification. Residues 44–57 are compositionally biased toward low complexity; sequence TQTATQQAQLAAAA. The tract at residues 69–80 is required for DNA-binding; sequence QSRSEKKARKAM. The NAC-A/B domain maps to 70 to 135; it reads SRSEKKARKA…AKIEDLSQQA (66 aa). An RNA/DNA-binding region spans residues 93–108; that stretch reads RVTIRKSKNILFVITK. Ser-132 carries the post-translational modification Phosphoserine. Lys-142 is modified (N6-acetyllysine; alternate). Residue Lys-142 forms a Glycyl lysine isopeptide (Lys-Gly) (interchain with G-Cter in SUMO2); alternate linkage. The residue at position 159 (Thr-159) is a Phosphothreonine; by GSK3-beta. Position 161 is a phosphothreonine (Thr-161). Phosphoserine is present on residues Ser-166, Ser-186, Ser-191, and Ser-203. The UBA domain occupies 176–213; sequence VEVKDIELVMSQANVSRAKAVRALKNNSNDIVNAIMEL.

This sequence belongs to the NAC-alpha family. As to quaternary structure, part of the nascent polypeptide-associated complex (NAC), which is a heterodimer of NACA and BTF3 (via NAC-A/B domains). NAC associates with ribosomes through the BTF3/NACB subunit and contacts the ribosomal protein L23, which is positioned near the exiting site. Both subunits can contact nascent polypeptide chains. NACA may also form homodimers, and only this form binds DNA. Interacts with TBP and JUN. Phosphorylation of Ser-43 by ILK during cell adhesion may promote nuclear localization. Phosphorylation of Thr-159 by GSK3B may promote proteasome mediated degradation. As to expression, isoform 1 appears to be ubiquitously expressed.

Its subcellular location is the cytoplasm. It is found in the nucleus. Functionally, prevents inappropriate targeting of non-secretory polypeptides to the endoplasmic reticulum (ER). Binds to nascent polypeptide chains as they emerge from the ribosome and blocks their interaction with the signal recognition particle (SRP), which normally targets nascent secretory peptides to the ER. Also reduces the inherent affinity of ribosomes for protein translocation sites in the ER membrane (M sites). Isoform 1 and isoform 2 appear to bind DNA and play roles in transcription. Isoform 1 may function as a specific coactivator for JUN, acting to stabilize the interaction of JUN homodimers with promoter elements. This chain is Nascent polypeptide-associated complex subunit alpha (Naca), found in Mus musculus (Mouse).